The chain runs to 261 residues: Triosephosphate isomerase (261 aa).

Position 10-12 (Asn10–Lys12) interacts with substrate. His100 serves as the catalytic Electrophile. Glu172 serves as the catalytic Proton acceptor. Substrate is bound by residues Gly178, Ser218, and Gly239–Gly240.

The protein belongs to the triosephosphate isomerase family. Homodimer.

It localises to the cytoplasm. The catalysed reaction is D-glyceraldehyde 3-phosphate = dihydroxyacetone phosphate. It participates in carbohydrate biosynthesis; gluconeogenesis. It functions in the pathway carbohydrate degradation; glycolysis; D-glyceraldehyde 3-phosphate from glycerone phosphate: step 1/1. Functionally, involved in the gluconeogenesis. Catalyzes stereospecifically the conversion of dihydroxyacetone phosphate (DHAP) to D-glyceraldehyde-3-phosphate (G3P). The polypeptide is Triosephosphate isomerase (Mycobacterium bovis (strain BCG / Pasteur 1173P2)).